The following is a 360-amino-acid chain: Beta-1,3-N-acetylglucosaminyltransferase manic fringe (360 aa).

At 1–5 (MILRR) the chain is on the cytoplasmic side. Residues 6–26 (LFHVLPAFAFTLFILVLLDLQ) traverse the membrane as a helical; Signal-anchor for type II membrane protein segment. The Lumenal portion of the chain corresponds to 27 to 360 (LRTRSDQKPQ…ALSWNQHVMH (334 aa)). The disordered stretch occupies residues 51-74 (TTAENQHRDGAHEKEKAEGQKWTE). Positions 55–74 (NQHRDGAHEKEKAEGQKWTE) are enriched in basic and acidic residues. Residue Arg100 participates in substrate binding. Disulfide bonds link Cys139-Cys150 and Cys168-Cys231. Substrate is bound at residue Asp172. Asp173 provides a ligand contact to Mn(2+). Asn214 carries N-linked (GlcNAc...) asparagine glycosylation. Asp261 is an active-site residue. Mn(2+) is bound at residue His285. Cys335 and Cys344 form a disulfide bridge.

Belongs to the glycosyltransferase 31 family. It depends on Mn(2+) as a cofactor.

It is found in the golgi apparatus membrane. It carries out the reaction 3-O-(alpha-L-fucosyl)-L-threonyl-[EGF-like domain protein] + UDP-N-acetyl-alpha-D-glucosamine = 3-O-(N-acetyl-beta-D-glucosaminyl-(1-&gt;3)-alpha-L-fucosyl)-L-threonyl-[EGF-like domain protein] + UDP + H(+). It catalyses the reaction 3-O-(alpha-L-fucosyl)-L-seryl-[EGF-like domain protein] + UDP-N-acetyl-alpha-D-glucosamine = 3-O-(N-acetyl-beta-D-glucosaminyl-(1-&gt;3)-alpha-L-fucosyl)-L-seryl-[EGF-like domain protein] + UDP + H(+). Functionally, glycosyltransferase that initiates the elongation of O-linked fucose residues attached to EGF-like repeats in the extracellular domain of Notch molecules. The polypeptide is Beta-1,3-N-acetylglucosaminyltransferase manic fringe (Danio rerio (Zebrafish)).